A 344-amino-acid polypeptide reads, in one-letter code: Endo-1,4-beta-xylanase UM03411 (344 aa).

Positions 1 to 21 (MKTNFLVLLSALLAASSAVTA) are cleaved as a signal peptide. Residues 35–338 (QRAGSSLNAA…KPAYNAVLST (304 aa)) form the GH10 domain. The Proton donor role is filled by E166. N171 carries an N-linked (GlcNAc...) asparagine glycan. E275 acts as the Nucleophile in catalysis. Cysteines 293 and 299 form a disulfide. N-linked (GlcNAc...) asparagine glycosylation is found at N310 and N323.

The protein belongs to the glycosyl hydrolase 10 (cellulase F) family.

The protein localises to the secreted. The catalysed reaction is Endohydrolysis of (1-&gt;4)-beta-D-xylosidic linkages in xylans.. It participates in glycan degradation; xylan degradation. In terms of biological role, endo-1,4-beta-xylanase involved in the hydrolysis of xylan, a major structural heterogeneous polysaccharide found in plant biomass representing the second most abundant polysaccharide in the biosphere, after cellulose. This is Endo-1,4-beta-xylanase UM03411 from Mycosarcoma maydis (Corn smut fungus).